Here is a 154-residue protein sequence, read N- to C-terminus: Aspartate carbamoyltransferase regulatory chain (154 aa).

4 residues coordinate Zn(2+): cysteine 109, cysteine 114, cysteine 138, and cysteine 141.

Belongs to the PyrI family. In terms of assembly, contains catalytic and regulatory chains. Zn(2+) is required as a cofactor.

Involved in allosteric regulation of aspartate carbamoyltransferase. The polypeptide is Aspartate carbamoyltransferase regulatory chain (Pectobacterium carotovorum subsp. carotovorum (strain PC1)).